A 60-amino-acid polypeptide reads, in one-letter code: Large ribosomal subunit protein bL32 (60 aa).

Belongs to the bacterial ribosomal protein bL32 family.

The protein is Large ribosomal subunit protein bL32 (rpmF) of Thermotoga maritima (strain ATCC 43589 / DSM 3109 / JCM 10099 / NBRC 100826 / MSB8).